The primary structure comprises 1342 residues: DNA-directed RNA polymerase subunit beta (1342 aa).

It belongs to the RNA polymerase beta chain family. The RNAP catalytic core consists of 2 alpha, 1 beta, 1 beta' and 1 omega subunit. When a sigma factor is associated with the core the holoenzyme is formed, which can initiate transcription.

The catalysed reaction is RNA(n) + a ribonucleoside 5'-triphosphate = RNA(n+1) + diphosphate. In terms of biological role, DNA-dependent RNA polymerase catalyzes the transcription of DNA into RNA using the four ribonucleoside triphosphates as substrates. The sequence is that of DNA-directed RNA polymerase subunit beta from Edwardsiella ictaluri (strain 93-146).